The following is a 728-amino-acid chain: Sodium-dependent transporter snf-5 (728 aa).

The Cytoplasmic portion of the chain corresponds to 1–84; it reads MADSGSNEEA…PEEEEEKRDG (84 aa). The interval 1–84 is disordered; it reads MADSGSNEEA…PEEEEEKRDG (84 aa). Low complexity-rich tracts occupy residues 29–50 and 60–73; these read QQVSQQSNQLSSQKSIQQSTQS and KNTTVTTTRPTLDT. Residues 85-105 form a helical membrane-spanning segment; sequence FGNSFEFVLTSLGLAVGLGNI. G97, A99, V100, and N104 together coordinate Na(+). The Extracellular segment spans residues 106–119; the sequence is WRFPTRAYNNGGSA. A helical membrane pass occupies residues 120-140; the sequence is FLIPYLTCAFLFGLPAVYFEF. The Cytoplasmic segment spans residues 141–162; sequence LTGQYQGKSPPVIFRRVRPILE. A helical membrane pass occupies residues 163 to 183; that stretch reads GVGWMGVFVAALVAIYYIVIV. The Extracellular portion of the chain corresponds to 184 to 285; that stretch reads SWISIYMINI…PSSGMLDFGG (102 aa). C204 and C214 form a disulfide bridge. N210, N225, N232, N237, and N257 each carry an N-linked (GlcNAc...) asparagine glycan. A helical transmembrane segment spans residues 286–306; that stretch reads FNWPVFAAMSVCWLLTGLGIL. The Cytoplasmic portion of the chain corresponds to 307–314; sequence KGAKIMGK. The chain crosses the membrane as a helical span at residues 315–335; it reads ISYVSVLVPYVLVVVLFINGV. The Extracellular portion of the chain corresponds to 336–364; that stretch reads FQDGSGVGLEMYFGTPNYTKLYEQDTWTE. N352 carries N-linked (GlcNAc...) asparagine glycosylation. The chain crosses the membrane as a helical span at residues 365 to 386; the sequence is ALKQLCFSLSVGHGGLISLSSY. Na(+) is bound at residue S372. Residues 387–396 lie on the Cytoplasmic side of the membrane; sequence SPKRNNIFRD. Residues 397 to 417 traverse the membrane as a helical segment; sequence ALIVIIGDTTMSLVGGGAVFA. Residues 418 to 451 are Extracellular-facing; sequence TLGYLAKATGQDVKDVVKSGLSLAFVVYPEAMTR. Residues 452 to 472 traverse the membrane as a helical segment; the sequence is MPVPWLWCFIFFLMLFLLGAS. Residue L469 participates in Na(+) binding. Topologically, residues 473 to 495 are cytoplasmic; the sequence is TEIALVDVFCSCIYDQYPRFRNR. A helical membrane pass occupies residues 496–516; sequence KWIVVIAWCSVLYCIGLVFST. Residues 517-531 lie on the Extracellular side of the membrane; sequence RAGYYWFEMFDEYAA. Residues 532 to 552 traverse the membrane as a helical segment; that stretch reads GFSSVCTVVCELLVMMYIYGF. Residues 553–578 lie on the Cytoplasmic side of the membrane; it reads RNVRDDITEVVGHARNKFTGAIGAHS. A helical membrane pass occupies residues 579–599; it reads WYFTANWMVISPSIALILVGL. Residues 600 to 616 lie on the Extracellular side of the membrane; sequence SFVREYPYMGRHDIYPA. The chain crosses the membrane as a helical span at residues 617 to 637; that stretch reads VFDIFGWFLSFLPVIIVPIFM. Residues 638 to 728 are Cytoplasmic-facing; sequence LLNFIRCRNR…DTSSTYHQVY (91 aa). Over residues 687 to 699 the composition is skewed to acidic residues; sequence PWDEENVDLTDSE. Residues 687 to 728 are disordered; the sequence is PWDEENVDLTDSESESRNAASGDVPIDDVATIDTSSTYHQVY. Positions 718 to 728 are enriched in polar residues; that stretch reads IDTSSTYHQVY.

This sequence belongs to the sodium:neurotransmitter symporter (SNF) (TC 2.A.22) family. As to expression, expressed in the INT-9 cells and posterior cells of the alimentary canal of the intestine, gut epithelial cells, the pharynx of some worms, two cells of the rectal gland, and in DVA, DVB and DVC neurons and amphid sensory neurons ASI, ADF and ASK neurons.

The protein resides in the cell membrane. Its function is as follows. Sodium-dependent amino acid transporter that mediates the uptake of the L-enantiomers of various amino acids, including L-proline and L-methionine, and also of acidic amino acids such as L-glutamic acid and L-aspartic acid. May additionally have a role in potassium-dependent amino acid absorption. In response to the availability of amino acid nutrients, may play a role in dauer formation. May play a role in promoting fertility. The chain is Sodium-dependent transporter snf-5 from Caenorhabditis elegans.